The chain runs to 267 residues: WUSCHEL-related homeobox 8 (267 aa).

A DNA-binding region (homeobox; WUS-type) is located at residues 88 to 152 (TARQRWTPTP…NRRARSKRKQ (65 aa)). The disordered stretch occupies residues 148–195 (SKRKQAALPNNNAESEAEADEESPTDKKPKSDRPLHQNIAMRDHNSER). Basic and acidic residues predominate over residues 171–195 (PTDKKPKSDRPLHQNIAMRDHNSER).

Belongs to the WUS homeobox family.

Its subcellular location is the nucleus. Functionally, transcription factor which may be involved in developmental processes. In Oryza sativa subsp. japonica (Rice), this protein is WUSCHEL-related homeobox 8 (WOX8).